Here is a 313-residue protein sequence, read N- to C-terminus: Methylenetetrahydrofolate dehydrogenase [NAD(+)] (313 aa).

The active site involves cysteine 152. Residues 187-188 (RS), 210-211 (DI), and 270-272 (FAG) each bind NAD(+).

It belongs to the tetrahydrofolate dehydrogenase/cyclohydrolase family. As to quaternary structure, homodimer.

The enzyme catalyses (6R)-5,10-methylene-5,6,7,8-tetrahydrofolate + NAD(+) = (6R)-5,10-methenyltetrahydrofolate + NADH. The protein operates within one-carbon metabolism; tetrahydrofolate interconversion. Functionally, catalyzes oxidation of cytoplasmic one-carbon units for purine biosynthesis. The protein is Methylenetetrahydrofolate dehydrogenase [NAD(+)] (thfA) of Dictyostelium discoideum (Social amoeba).